We begin with the raw amino-acid sequence, 556 residues long: Urocanate hydratase (556 aa).

Residues 52–53 (GG), Gln-130, 176–178 (GMG), Glu-196, Arg-201, 242–243 (NA), 263–267 (QTSAH), 273–274 (YL), and Tyr-322 contribute to the NAD(+) site. Cys-410 is a catalytic residue. Gly-492 contacts NAD(+).

Belongs to the urocanase family. NAD(+) serves as cofactor.

It is found in the cytoplasm. The enzyme catalyses 4-imidazolone-5-propanoate = trans-urocanate + H2O. It functions in the pathway amino-acid degradation; L-histidine degradation into L-glutamate; N-formimidoyl-L-glutamate from L-histidine: step 2/3. Functionally, catalyzes the conversion of urocanate to 4-imidazolone-5-propionate. This Shewanella oneidensis (strain ATCC 700550 / JCM 31522 / CIP 106686 / LMG 19005 / NCIMB 14063 / MR-1) protein is Urocanate hydratase.